The following is a 169-amino-acid chain: Small ribosomal subunit protein bS18c (169 aa).

Residues 1-61 form a disordered region; the sequence is MYTSKQPFLK…RRPRIGPGDR (61 aa). Positions 27–55 are enriched in basic residues; sequence QTFRKSKQTFRKFKQPFRKSKQPFRRRPR.

It belongs to the bacterial ribosomal protein bS18 family. As to quaternary structure, part of the 30S ribosomal subunit.

The protein localises to the plastid. Its subcellular location is the chloroplast. The sequence is that of Small ribosomal subunit protein bS18c from Agrostis stolonifera (Creeping bentgrass).